The primary structure comprises 519 residues: Acetylcholine receptor subunit gamma (519 aa).

Positions 1–22 are cleaved as a signal peptide; that stretch reads MHGGQGPQLLLLLLATCLGAQS. The Extracellular segment spans residues 23–240; that stretch reads RNQEERLLAD…VVFYLLIQRK (218 aa). Residues Asn52 and Asn163 are each glycosylated (N-linked (GlcNAc...) asparagine). Cys150 and Cys164 form a disulfide bridge. 3 helical membrane-spanning segments follow: residues 241 to 265, 274 to 292, and 308 to 329; these read PLFY…IYFL, CTVA…FLVA, and YLTF…VLNV. Topologically, residues 330 to 476 are cytoplasmic; that stretch reads SLRSPHTHSM…WLLVGRVLDR (147 aa). The chain crosses the membrane as a helical span at residues 477-497; the sequence is VCFLAMLSLFICGTAGIFLMA.

This sequence belongs to the ligand-gated ion channel (TC 1.A.9) family. Acetylcholine receptor (TC 1.A.9.1) subfamily. Gamma/CHRNG sub-subfamily. Pentamer of two alpha chains, and one each of the beta, delta, and gamma (in immature muscle) or epsilon (in mature muscle) chains.

The protein localises to the postsynaptic cell membrane. The protein resides in the cell membrane. The catalysed reaction is K(+)(in) = K(+)(out). It catalyses the reaction Na(+)(in) = Na(+)(out). In terms of biological role, after binding acetylcholine, the AChR responds by an extensive change in conformation that affects all subunits and leads to opening of an ion-conducting channel across the plasma membrane. The sequence is that of Acetylcholine receptor subunit gamma (Chrng) from Rattus norvegicus (Rat).